A 407-amino-acid chain; its full sequence is Arginine deiminase (407 aa).

Cys397 (amidino-cysteine intermediate) is an active-site residue.

The protein belongs to the arginine deiminase family.

It is found in the cytoplasm. The catalysed reaction is L-arginine + H2O = L-citrulline + NH4(+). The protein operates within amino-acid degradation; L-arginine degradation via ADI pathway; carbamoyl phosphate from L-arginine: step 1/2. In Listeria welshimeri serovar 6b (strain ATCC 35897 / DSM 20650 / CCUG 15529 / CIP 8149 / NCTC 11857 / SLCC 5334 / V8), this protein is Arginine deiminase.